Reading from the N-terminus, the 498-residue chain is Swainsonine transporter swnT (498 aa).

Basic and acidic residues predominate over residues 1 to 10; that stretch reads MSLRNDEQTE. The tract at residues 1–21 is disordered; that stretch reads MSLRNDEQTEKGAVVGKVDSQ. Helical transmembrane passes span 42-64, 79-99, 126-146, 167-187, and 193-213; these read LSAI…VLGT, LAMA…ISAI, AMIS…AVPV, FVVF…EYFL, and ALLL…FATA. N-linked (GlcNAc...) asparagine glycosylation is found at Asn227 and Asn242. 6 helical membrane passes run 272-292, 316-336, 370-390, 398-418, 436-456, and 469-489; these read LIWT…AVLV, AAAI…VWSI, PIWS…LYLA, LIAT…ILVL, GFMA…FYCF, and YVSA…FLYA.

This sequence belongs to the amino acid-polyamine-organocation (APC) superfamily. Amino acid/choline transporter (ACT) (TC 2.A.3.4) family.

It localises to the membrane. Transmembrane transporter; part of the gene cluster that mediates the biosynthesis of swainsonine, a cytotoxic fungal alkaloid and a potential cancer therapy drug. Does not mediate the secretion of SW and the exact role of swnT in SW biosynthesis remains to be determined. In Arthroderma benhamiae (strain ATCC MYA-4681 / CBS 112371) (Trichophyton mentagrophytes), this protein is Swainsonine transporter swnT.